A 405-amino-acid chain; its full sequence is MQEKDVSSHGFLPRFQHFATQAIHAGQEPEQWASKAVVPPISLSTTFKQEAPGQHSGFEYSRSGNPTXNCLEKAVAVLDGAKYSLAFASGLAATVTITHLLKAGXQIISMDDVYGGTNRYFRQVAAEFGLKISFVDCSKSKLLEAAITPETKLVWIETPTNPILKMIDIEACAQIVHKHGDIILVVDNTFMSAYFQRPLALGADICMYSATKYMNGHSDVVMGLVSLNSETLHSRLRFLQNSLGAVPSPIDCYLCNRGLKTLQVRMEKHFENGMAVAQFLESHPLVEKVIYPGLPSHPQHELAKRQCTGCPGMISFYIKGSLHHAETFLKSLKLFTLAESLGGYESLAELPAIMTHSSVPKSDREVLGIRDTLIRLSVGLEDKQDLMDDLDQALKAAHPTNASHN.

Substrate-binding residues include Arg-62, Tyr-114, and Arg-119. N6-(pyridoxal phosphate)lysine is present on Lys-212. Glu-339 contributes to the substrate binding site.

This sequence belongs to the trans-sulfuration enzymes family. As to quaternary structure, homotetramer. Interacts with CALM in a calcium-dependent manner. The cofactor is pyridoxal 5'-phosphate.

It localises to the cytoplasm. The catalysed reaction is L,L-cystathionine + H2O = 2-oxobutanoate + L-cysteine + NH4(+). It carries out the reaction L-cysteine + H2O = hydrogen sulfide + pyruvate + NH4(+) + H(+). The enzyme catalyses L-homocysteine + H2O = 2-oxobutanoate + hydrogen sulfide + NH4(+) + H(+). It catalyses the reaction L-homoserine = 2-oxobutanoate + NH4(+). The catalysed reaction is L-selenocystathionine + H2O = L-selenocysteine + 2-oxobutanoate + NH4(+). It functions in the pathway amino-acid biosynthesis; L-cysteine biosynthesis; L-cysteine from L-homocysteine and L-serine: step 2/2. Catalyzes the last step in the trans-sulfuration pathway from L-methionine to L-cysteine in a pyridoxal-5'-phosphate (PLP)-dependent manner, which consists on cleaving the L,L-cystathionine molecule into L-cysteine, ammonia and 2-oxobutanoate. Part of the L-cysteine derived from the trans-sulfuration pathway is utilized for biosynthesis of the ubiquitous antioxidant glutathione. Besides its role in the conversion of L-cystathionine into L-cysteine, it utilizes L-cysteine and L-homocysteine as substrates (at much lower rates than L,L-cystathionine) to produce hydrogen sulfide (H2S). In vitro, it converts two L-cysteine molecules into lanthionine and H2S, and two L-homocysteine molecules to homolanthionine and H2S, which can be particularly relevant under conditions of severe hyperhomocysteinemia. Lanthionine and homolanthionine are structural homologs of L,L-cystathionine that differ by the absence or presence of an extra methylene group, respectively. Acts as a cysteine-protein sulfhydrase by mediating sulfhydration of target proteins: sulfhydration consists of converting -SH groups into -SSH on specific cysteine residues of target proteins such as GAPDH, PTPN1 and NF-kappa-B subunit RELA, thereby regulating their function. By generating the gasotransmitter H2S, it participates in a number of physiological processes such as vasodilation, bone protection, and inflammation. Plays an essential role in myogenesis by contributing to the biogenesis of H2S in skeletal muscle tissue. Can also accept homoserine as substrate. Catalyzes the elimination of selenocystathionine (which can be derived from the diet) to yield selenocysteine, ammonia and 2-oxobutanoate. This Sus scrofa (Pig) protein is Cystathionine gamma-lyase (CTH).